A 564-amino-acid chain; its full sequence is Arginine--tRNA ligase (564 aa).

The short motif at 136–146 (ANPTGPLHMGN) is the 'HIGH' region element.

This sequence belongs to the class-I aminoacyl-tRNA synthetase family. Monomer.

It is found in the cytoplasm. The enzyme catalyses tRNA(Arg) + L-arginine + ATP = L-arginyl-tRNA(Arg) + AMP + diphosphate. The protein is Arginine--tRNA ligase of Ruminiclostridium cellulolyticum (strain ATCC 35319 / DSM 5812 / JCM 6584 / H10) (Clostridium cellulolyticum).